The following is a 1074-amino-acid chain: Pleckstrin homology domain-containing family M member 1 (1074 aa).

The RUN domain maps to 40–182; sequence TSEDGDANTM…LSFELSYKSA (143 aa). 3 disordered regions span residues 214-244, 272-336, and 382-454; these read QRKE…RRNR, LQEN…MFQT, and DEKQ…PPQE. A Phosphoserine modification is found at serine 218. Composition is skewed to polar residues over residues 313 to 329 and 393 to 404; these read SKAQ…NQEP and PAQSTSDQQPSS. Residues serine 433, serine 436, and serine 491 each carry the phosphoserine modification. Residues 506 to 526 form a disordered region; the sequence is GNAQPAPAPAPAPAPAPAPAP. The segment covering 511 to 525 has biased composition (pro residues); the sequence is APAPAPAPAPAPAPA. Residues 551 to 642 enclose the PH 1 domain; sequence GLMKLGTVAR…WLDRVREALQ (92 aa). The LIR signature appears at 649-655; that stretch reads EDEWVNI. A disordered region spans residues 661–680; that stretch reads AEDAPEAPPDSLPPYSTLLP. Residues 672–1074 form an interaction with RAB7A region; it reads LPPYSTLLPE…RKYQEQNVVS (403 aa). The 95-residue stretch at 701 to 795 folds into the PH 2 domain; sequence DAIKESLLYL…WRDLVRKVLA (95 aa). A Phorbol-ester/DAG-type zinc finger spans residues 1004–1058; that stretch reads QHVYHCDLCTQRGFICQICHHQDIIFPFEFDTTVRCAECRTVFHQSCQAVVRKGC.

In terms of assembly, interacts (via N- and C-terminus) with RAB7A (GTP-bound form). Simultaneously interacts with RAB7A and ARL8B; bringing about clustering and fusion of late endosomes and lysosomes. Interacts (via RUN domain) with ARL8B (GTP-bound form); the interaction is required for PLEKHM1 localization to lysosomes and for ARL8B function in delivery and degradation of endocytic and autophagic cargo in lysosomes. PLEKHM1 and PLEKHM2 compete for interaction with ARL8B. Interacts with ARL8A; the interaction is weaker than with ARL8B. Interacts with VPS41, VPS11, VPS18, VPS33A and VPS39; indicative for an association with the HOPS complex; the interactions with, at least, VPS41, VPS11, VPS18 and VPS33A require ARL8B. Interacts with GABARAP, GABARAPL, GABARAPL2, MAP1LC3A, MAP1LC3B and MAP1LC3C. Interacts with PAFAH1B. Interacts (via N- and C-terminus) with NDEL1. Interacts (via C-terminus) with MAP3K7. Interacts (via N- and C-terminus) with FAM98A. Interacts (via C-terminus) with DEF8; this interaction is weak but increased in a RAB7A-dependent manner. May interact with sialyl-lex-positive protein.

The protein localises to the autolysosome membrane. It localises to the endosome membrane. The protein resides in the late endosome membrane. It is found in the lysosome membrane. Acts as a multivalent adapter protein that regulates Rab7-dependent and HOPS complex-dependent fusion events in the endolysosomal system and couples autophagic and the endocytic trafficking pathways. Acts as a dual effector of RAB7A and ARL8B that simultaneously binds these GTPases, bringing about clustering and fusion of late endosomes and lysosomes. Required for late stages of endolysosomal maturation, facilitating both endocytosis-mediated degradation of growth factor receptors and autophagosome clearance. Interaction with Arl8b is a crucial factor in the terminal maturation of autophagosomes and to mediate autophagosome-lysosome fusion. Positively regulates lysosome peripheral distribution and ruffled border formation in osteoclasts. May be involved in negative regulation of endocytic transport from early endosome to late endosome/lysosome implicating its association with Rab7. May have a role in sialyl-lex-mediated transduction of apoptotic signals. Involved in bone resorption. The chain is Pleckstrin homology domain-containing family M member 1 from Mus musculus (Mouse).